We begin with the raw amino-acid sequence, 407 residues long: MVDWSTLPKDLLDLISKSLESSFDLIQFRSVCSSWRSAAEPKSPLPTHHLPILPDNGGSLFPDSAVGFRLSQRSILLIKPHEPCIESDSFGWLIKVEEDLNVPRKVTLLDPLCDTRNSIPENFPRVLDMSKFKVRELGREFKLHYFNTVGDIVESLYLEKAVVKYLDCDGDYKFVLLTIHVSGKLAVFRSWDRAWTVINDMPSPYDDVMLFDGRFFAVDNNGRTVVVDYSSLKLTLVASPVFGGDKKFLIESCGEMLLVDMYLSLEAVEGDPGFVEEIFEHPAFYMNERTVKFKVYRFVEREESWVDVYDLEDKMLFLGDDSTFSASASDILPLCDGSSVFFNGNVFNGEDLGAMQDRDLGVFDFRSGKIELVQKLPEYAKLFWPPPPWITSHARAEDHIGETSSQS.

The 49-residue stretch at valine 2 to leucine 50 folds into the F-box domain.

Part of a SCF (ASK-cullin-F-box) protein ligase complex. Interacts with SKP1A/ASK1.

The protein resides in the nucleus. Its pathway is protein modification; protein ubiquitination. Functionally, component of SCF(ASK-cullin-F-box) E3 ubiquitin ligase complexes, which may mediate the ubiquitination and subsequent proteasomal degradation of target proteins. This chain is F-box protein SKIP23 (SKIP23), found in Arabidopsis thaliana (Mouse-ear cress).